Here is a 231-residue protein sequence, read N- to C-terminus: 7-cyano-7-deazaguanine synthase (231 aa).

An ATP-binding site is contributed by 8–18; that stretch reads FSGGQDSTTCL. Zn(2+) is bound by residues C188, C197, C200, and C203.

Belongs to the QueC family. Zn(2+) serves as cofactor.

It carries out the reaction 7-carboxy-7-deazaguanine + NH4(+) + ATP = 7-cyano-7-deazaguanine + ADP + phosphate + H2O + H(+). Its pathway is purine metabolism; 7-cyano-7-deazaguanine biosynthesis. Catalyzes the ATP-dependent conversion of 7-carboxy-7-deazaguanine (CDG) to 7-cyano-7-deazaguanine (preQ(0)). The chain is 7-cyano-7-deazaguanine synthase from Shigella flexneri serotype 5b (strain 8401).